Reading from the N-terminus, the 308-residue chain is Methionyl-tRNA formyltransferase (308 aa).

Position 109 to 112 (S109 to P112) interacts with (6S)-5,6,7,8-tetrahydrofolate.

Belongs to the Fmt family.

The enzyme catalyses L-methionyl-tRNA(fMet) + (6R)-10-formyltetrahydrofolate = N-formyl-L-methionyl-tRNA(fMet) + (6S)-5,6,7,8-tetrahydrofolate + H(+). Attaches a formyl group to the free amino group of methionyl-tRNA(fMet). The formyl group appears to play a dual role in the initiator identity of N-formylmethionyl-tRNA by promoting its recognition by IF2 and preventing the misappropriation of this tRNA by the elongation apparatus. The polypeptide is Methionyl-tRNA formyltransferase (Rhizorhabdus wittichii (strain DSM 6014 / CCUG 31198 / JCM 15750 / NBRC 105917 / EY 4224 / RW1) (Sphingomonas wittichii)).